The following is a 65-amino-acid chain: MPKQKTHRASAKRFKRTGSGGLKRFRAFTSHRFHGKTKKQRRHLRKAGMVHAGDFKRIKAMVTGL.

Positions 1–16 (MPKQKTHRASAKRFKR) are enriched in basic residues. The interval 1 to 20 (MPKQKTHRASAKRFKRTGSG) is disordered.

The protein belongs to the bacterial ribosomal protein bL35 family.

This is Large ribosomal subunit protein bL35 from Streptococcus equi subsp. equi (strain 4047).